Reading from the N-terminus, the 258-residue chain is Imidazole glycerol phosphate synthase subunit HisF (258 aa).

Residues Asp11 and Asp130 contribute to the active site.

Belongs to the HisA/HisF family. Heterodimer of HisH and HisF.

The protein localises to the cytoplasm. The enzyme catalyses 5-[(5-phospho-1-deoxy-D-ribulos-1-ylimino)methylamino]-1-(5-phospho-beta-D-ribosyl)imidazole-4-carboxamide + L-glutamine = D-erythro-1-(imidazol-4-yl)glycerol 3-phosphate + 5-amino-1-(5-phospho-beta-D-ribosyl)imidazole-4-carboxamide + L-glutamate + H(+). It participates in amino-acid biosynthesis; L-histidine biosynthesis; L-histidine from 5-phospho-alpha-D-ribose 1-diphosphate: step 5/9. Functionally, IGPS catalyzes the conversion of PRFAR and glutamine to IGP, AICAR and glutamate. The HisF subunit catalyzes the cyclization activity that produces IGP and AICAR from PRFAR using the ammonia provided by the HisH subunit. This Bradyrhizobium sp. (strain ORS 278) protein is Imidazole glycerol phosphate synthase subunit HisF.